Consider the following 494-residue polypeptide: 3-octaprenyl-4-hydroxybenzoate carboxy-lyase (494 aa).

A Mn(2+)-binding site is contributed by Asn172. Prenylated FMN-binding positions include 175 to 177 (IYR), 189 to 191 (RWL), and 194 to 195 (RG). Glu238 contacts Mn(2+). Asp287 serves as the catalytic Proton donor.

Belongs to the UbiD family. As to quaternary structure, homohexamer. Prenylated FMN is required as a cofactor. Mn(2+) serves as cofactor.

It localises to the cell membrane. The enzyme catalyses a 4-hydroxy-3-(all-trans-polyprenyl)benzoate + H(+) = a 2-(all-trans-polyprenyl)phenol + CO2. It participates in cofactor biosynthesis; ubiquinone biosynthesis. Catalyzes the decarboxylation of 3-octaprenyl-4-hydroxy benzoate to 2-octaprenylphenol, an intermediate step in ubiquinone biosynthesis. The sequence is that of 3-octaprenyl-4-hydroxybenzoate carboxy-lyase from Citrobacter koseri (strain ATCC BAA-895 / CDC 4225-83 / SGSC4696).